The primary structure comprises 191 residues: Negative modulator of initiation of replication (191 aa).

The interval 96–97 is interaction with DNA; that stretch reads AV.

The protein belongs to the SeqA family. As to quaternary structure, homodimer. Polymerizes to form helical filaments.

Its subcellular location is the cytoplasm. Its function is as follows. Negative regulator of replication initiation, which contributes to regulation of DNA replication and ensures that replication initiation occurs exactly once per chromosome per cell cycle. Binds to pairs of hemimethylated GATC sequences in the oriC region, thus preventing assembly of replication proteins and re-initiation at newly replicated origins. Repression is relieved when the region becomes fully methylated. This chain is Negative modulator of initiation of replication, found in Shewanella amazonensis (strain ATCC BAA-1098 / SB2B).